Consider the following 205-residue polypeptide: Cytochrome c oxidase subunit 3 (205 aa).

The next 5 helical transmembrane spans lie at 29 to 49, 73 to 93, 104 to 124, 144 to 164, and 184 to 204; these read TIVF…MYFV, LAIT…VFAA, WFLI…YEYF, ITTG…VVVL, and SYYW…IYFI.

This sequence belongs to the cytochrome c oxidase subunit 3 family. Associates with subunits I, II and IV to form cytochrome c oxidase.

The protein localises to the cell membrane. The catalysed reaction is 4 Fe(II)-[cytochrome c] + O2 + 8 H(+)(in) = 4 Fe(III)-[cytochrome c] + 2 H2O + 4 H(+)(out). This chain is Cytochrome c oxidase subunit 3 (ctaE), found in Corynebacterium efficiens (strain DSM 44549 / YS-314 / AJ 12310 / JCM 11189 / NBRC 100395).